A 791-amino-acid chain; its full sequence is Lon protease (791 aa).

Positions 3–209 constitute a Lon N-terminal domain; the sequence is KPILISRAIV…TILHLLFDQL (207 aa). Position 365–372 (365–372) interacts with ATP; that stretch reads GPPGVGKT. Residues 605 to 790 form the Lon proteolytic domain; sequence TTIPGIVNGM…DEVYNIVFGE (186 aa). Active-site residues include serine 696 and lysine 739.

Belongs to the peptidase S16 family. As to quaternary structure, homohexamer. Organized in a ring with a central cavity.

The protein localises to the cytoplasm. The enzyme catalyses Hydrolysis of proteins in presence of ATP.. In terms of biological role, ATP-dependent serine protease that mediates the selective degradation of mutant and abnormal proteins as well as certain short-lived regulatory proteins. Required for cellular homeostasis and for survival from DNA damage and developmental changes induced by stress. Degrades polypeptides processively to yield small peptide fragments that are 5 to 10 amino acids long. Binds to DNA in a double-stranded, site-specific manner. The chain is Lon protease from Ureaplasma parvum serovar 3 (strain ATCC 27815 / 27 / NCTC 11736).